The chain runs to 128 residues: NADPH-dependent 7-cyano-7-deazaguanine reductase (128 aa).

Catalysis depends on Cys-39, which acts as the Thioimide intermediate. Catalysis depends on Asp-46, which acts as the Proton donor. Substrate contacts are provided by residues 61–63 and 80–81; these read IEL and HE.

It belongs to the GTP cyclohydrolase I family. QueF type 1 subfamily.

The protein resides in the cytoplasm. The enzyme catalyses 7-aminomethyl-7-carbaguanine + 2 NADP(+) = 7-cyano-7-deazaguanine + 2 NADPH + 3 H(+). It participates in tRNA modification; tRNA-queuosine biosynthesis. Its function is as follows. Catalyzes the NADPH-dependent reduction of 7-cyano-7-deazaguanine (preQ0) to 7-aminomethyl-7-deazaguanine (preQ1). The protein is NADPH-dependent 7-cyano-7-deazaguanine reductase of Magnetococcus marinus (strain ATCC BAA-1437 / JCM 17883 / MC-1).